The sequence spans 188 residues: Probable nicotinate-nucleotide adenylyltransferase (188 aa).

The protein belongs to the NadD family.

The enzyme catalyses nicotinate beta-D-ribonucleotide + ATP + H(+) = deamido-NAD(+) + diphosphate. Its pathway is cofactor biosynthesis; NAD(+) biosynthesis; deamido-NAD(+) from nicotinate D-ribonucleotide: step 1/1. Its function is as follows. Catalyzes the reversible adenylation of nicotinate mononucleotide (NaMN) to nicotinic acid adenine dinucleotide (NaAD). This chain is Probable nicotinate-nucleotide adenylyltransferase, found in Listeria monocytogenes serovar 1/2a (strain ATCC BAA-679 / EGD-e).